Consider the following 387-residue polypeptide: S-adenosylmethionine synthase (387 aa).

ATP is bound at residue His15. Mg(2+) is bound at residue Asp17. A K(+)-binding site is contributed by Glu43. Residues Glu56 and Gln99 each contribute to the L-methionine site. The segment at 99-109 (QSPDIAQGVNA) is flexible loop. Residues 166–168 (DAK), 232–233 (RF), Asp241, 247–248 (RK), Ala264, and Lys268 contribute to the ATP site. Residue Asp241 coordinates L-methionine. Residue Lys272 participates in L-methionine binding.

This sequence belongs to the AdoMet synthase family. Homotetramer; dimer of dimers. It depends on Mg(2+) as a cofactor. The cofactor is K(+).

The protein resides in the cytoplasm. It carries out the reaction L-methionine + ATP + H2O = S-adenosyl-L-methionine + phosphate + diphosphate. It participates in amino-acid biosynthesis; S-adenosyl-L-methionine biosynthesis; S-adenosyl-L-methionine from L-methionine: step 1/1. Functionally, catalyzes the formation of S-adenosylmethionine (AdoMet) from methionine and ATP. The overall synthetic reaction is composed of two sequential steps, AdoMet formation and the subsequent tripolyphosphate hydrolysis which occurs prior to release of AdoMet from the enzyme. This is S-adenosylmethionine synthase from Dechloromonas aromatica (strain RCB).